The sequence spans 92 residues: UPF0223 protein SPy_1248/M5005_Spy0958 (92 aa).

It belongs to the UPF0223 family.

The protein is UPF0223 protein SPy_1248/M5005_Spy0958 of Streptococcus pyogenes serotype M1.